Here is a 309-residue protein sequence, read N- to C-terminus: tRNA pseudouridine synthase B (309 aa).

The Nucleophile role is filled by D45.

This sequence belongs to the pseudouridine synthase TruB family. Type 1 subfamily.

It carries out the reaction uridine(55) in tRNA = pseudouridine(55) in tRNA. Functionally, responsible for synthesis of pseudouridine from uracil-55 in the psi GC loop of transfer RNAs. This chain is tRNA pseudouridine synthase B, found in Oleidesulfovibrio alaskensis (strain ATCC BAA-1058 / DSM 17464 / G20) (Desulfovibrio alaskensis).